Here is a 342-residue protein sequence, read N- to C-terminus: Foldase protein PrsA (342 aa).

Residues 1–22 form the signal peptide; the sequence is MVSVKKIVASALVGVLMFSAVG. C23 carries the N-palmitoyl cysteine lipid modification. C23 carries S-diacylglycerol cysteine lipidation. A PpiC domain is found at 190 to 284; it reads AKGVLARHLL…FGYHIIQAGA (95 aa).

This sequence belongs to the PrsA family.

It localises to the cell membrane. The catalysed reaction is [protein]-peptidylproline (omega=180) = [protein]-peptidylproline (omega=0). Plays a major role in protein secretion by helping the post-translocational extracellular folding of several secreted proteins. This Clostridium perfringens (strain SM101 / Type A) protein is Foldase protein PrsA.